Here is a 78-residue protein sequence, read N- to C-terminus: Beta-defensin 105A (78 aa).

The N-terminal stretch at 1–27 (MALIRKTFYFLFAVFFILVQLPSGCQA) is a signal peptide. 3 disulfides stabilise this stretch: C43–C74, C53–C67, and C57–C73.

Belongs to the beta-defensin family.

It is found in the secreted. In terms of biological role, has antimicrobial activity. The chain is Beta-defensin 105A (DEFB105A) from Gorilla gorilla gorilla (Western lowland gorilla).